The primary structure comprises 126 residues: Fluoride-specific ion channel FluC (126 aa).

The next 4 helical transmembrane spans lie at 6-26 (FLAVGVGAALGAWLRWALAIL), 36-56 (YGTLAANLVGGYLIGVAVGFF), 69-89 (LVITGFLGGLTTFSTFSGEVV), and 99-119 (IGVLHIVAHLGGSLFLTMLGF). Positions 76 and 79 each coordinate Na(+).

This sequence belongs to the fluoride channel Fluc/FEX (TC 1.A.43) family.

It localises to the cell inner membrane. The enzyme catalyses fluoride(in) = fluoride(out). Na(+) is not transported, but it plays an essential structural role and its presence is essential for fluoride channel function. Functionally, fluoride-specific ion channel. Important for reducing fluoride concentration in the cell, thus reducing its toxicity. This is Fluoride-specific ion channel FluC from Ralstonia pickettii (strain 12J).